The chain runs to 51 residues: uncharacterized protein (51 aa).

This protein is non-essential for virus function. This is an uncharacterized protein from Sulfolobus spindle-shape virus 1 (SSV1).